The following is a 335-amino-acid chain: Expansin-like protein 3 (335 aa).

The signal sequence occupies residues 1-20; sequence MKFNTIFLVLSIVKFILISA. At 21-314 the chain is on the extracellular side; the sequence is QSCPFSQSII…LNENENIESN (294 aa). The 101-residue stretch at 43-143 folds into the Expansin-like EG45 domain; the sequence is AGNCGFEKLN…VKVPCEVSGN (101 aa). Cystine bridges form between cysteine 46-cysteine 76 and cysteine 79-cysteine 138. Asparagine 87 carries N-linked (GlcNAc...) asparagine glycosylation. The tract at residues 247 to 276 is disordered; sequence YKPQTFNSQQTSNNQNSNTQTPTKQPSPNS. Residues 249–272 show a composition bias toward low complexity; the sequence is PQTFNSQQTSNNQNSNTQTPTKQP. Residues 315-335 traverse the membrane as a helical segment; it reads SLKLLPNFLLLILIILLNINF.

This sequence belongs to the expansin family. Expansin A subfamily.

Its subcellular location is the membrane. Functionally, may serve to lubricate the movement of the cellulose microfibrils during cell growth and wall extension and/or may serve to maintain the fluid state of the slug cell wall. The sequence is that of Expansin-like protein 3 (expl3) from Dictyostelium discoideum (Social amoeba).